Here is a 264-residue protein sequence, read N- to C-terminus: Low molecular mass lipoprotein PBMHPC-23 (264 aa).

The signal sequence occupies residues M1–A23.

It belongs to the 30 kDa lipoprotein family.

It is found in the secreted. The polypeptide is Low molecular mass lipoprotein PBMHPC-23 (Bombyx mori (Silk moth)).